Consider the following 556-residue polypeptide: Undecaprenyl phosphate-alpha-4-amino-4-deoxy-L-arabinose arabinosyl transferase (556 aa).

11 helical membrane passes run 5–25, 88–108, 116–136, 179–199, 207–227, 258–278, 296–316, 319–339, 355–375, 384–404, and 410–430; these read MIKL…LLPL, FASV…ALLL, LLAA…TYSV, FMTK…PVAL, LLLF…PWAL, APFW…LALL, FLLL…KGKL, YILP…SGLA, LAFG…IIMP, LTIV…AVSL, and WGYL…GSIP.

The protein belongs to the glycosyltransferase 83 family.

It is found in the cell inner membrane. The enzyme catalyses 4-amino-4-deoxy-alpha-L-arabinopyranosyl di-trans,octa-cis-undecaprenyl phosphate + lipid IVA = lipid IIA + di-trans,octa-cis-undecaprenyl phosphate.. It functions in the pathway lipopolysaccharide metabolism; 4-amino-4-deoxy-beta-L-arabinose-lipid A biosynthesis. Its function is as follows. Catalyzes the transfer of the L-Ara4N moiety of the glycolipid undecaprenyl phosphate-alpha-L-Ara4N to lipid A. The modified arabinose is attached to lipid A and is required for resistance to polymyxin and cationic antimicrobial peptides. This Pectobacterium carotovorum subsp. carotovorum (strain PC1) protein is Undecaprenyl phosphate-alpha-4-amino-4-deoxy-L-arabinose arabinosyl transferase.